Consider the following 326-residue polypeptide: Phospho-N-acetylmuramoyl-pentapeptide-transferase (326 aa).

Transmembrane regions (helical) follow at residues 3–23, 51–71, 79–99, 115–135, 138–158, 169–189, 195–215, 221–243, and 306–326; these read ISIS…PAFI, TMGG…LALF, VGMI…DDFL, LALQ…GGDM, VFSY…FWLV, GIDG…GVIA, MDIL…FVFN, VFMG…MALH, and FFFW…LYLM.

It belongs to the glycosyltransferase 4 family. MraY subfamily. It depends on Mg(2+) as a cofactor.

The protein resides in the cell membrane. The catalysed reaction is UDP-N-acetyl-alpha-D-muramoyl-L-alanyl-gamma-D-glutamyl-L-lysyl-D-alanyl-D-alanine + di-trans,octa-cis-undecaprenyl phosphate = Mur2Ac(oyl-L-Ala-gamma-D-Glu-L-Lys-D-Ala-D-Ala)-di-trans,octa-cis-undecaprenyl diphosphate + UMP. It functions in the pathway cell wall biogenesis; peptidoglycan biosynthesis. Functionally, catalyzes the initial step of the lipid cycle reactions in the biosynthesis of the cell wall peptidoglycan: transfers peptidoglycan precursor phospho-MurNAc-pentapeptide from UDP-MurNAc-pentapeptide onto the lipid carrier undecaprenyl phosphate, yielding undecaprenyl-pyrophosphoryl-MurNAc-pentapeptide, known as lipid I. This chain is Phospho-N-acetylmuramoyl-pentapeptide-transferase, found in Streptococcus pneumoniae (strain ATCC 700669 / Spain 23F-1).